Consider the following 236-residue polypeptide: 15,16-dihydrobiliverdin:ferredoxin oxidoreductase (236 aa).

This sequence belongs to the HY2 family.

The enzyme catalyses 15,16-dihydrobiliverdin + oxidized 2[4Fe-4S]-[ferredoxin] = biliverdin IXalpha + reduced 2[4Fe-4S]-[ferredoxin] + 2 H(+). In terms of biological role, catalyzes the two-electron reduction of biliverdin IX-alpha at the C15 methine bridge. The protein is 15,16-dihydrobiliverdin:ferredoxin oxidoreductase of Prochlorococcus marinus (strain AS9601).